We begin with the raw amino-acid sequence, 387 residues long: EP300-interacting inhibitor of differentiation 3 (387 aa).

Residues Met1–Ala19 are compositionally biased toward basic and acidic residues. The disordered stretch occupies residues Met1–Cys77. Over residues Glu32 to Ser72 the composition is skewed to acidic residues.

This sequence belongs to the NSE4 family. Component of the SMC5-SMC6 complex which consists at least of SMC5, SMC6, NSMCE2, NSMCE1, NSMCE4A or EID3 and NSMCE3. NSMCE1, NSMCE4A or EID3 and NSMCE3 probably form a subcomplex that bridges the head domains of the SMC5:SMC6 heterodimer. Homodimer, and heterodimer with EID2. Interacts with the C-terminal region of CREBBP.

It localises to the nucleus. The protein localises to the cytoplasm. Its subcellular location is the chromosome. The protein resides in the telomere. Functionally, tissue-specific component of the SMC5-SMC6 complex, a complex involved in repair of DNA double-strand breaks by homologous recombination. The complex may promote sister chromatid homologous recombination by recruiting the SMC1-SMC3 cohesin complex to double-strand breaks. The complex is required for telomere maintenance via recombination and mediates sumoylation of shelterin complex (telosome) components. Its function is as follows. Acts as a repressor of nuclear receptor-dependent transcription possibly by interfering with CREBBP-dependent coactivation. May function as a coinhibitor of other CREBBP/EP300-dependent transcription factors. The protein is EP300-interacting inhibitor of differentiation 3 of Rattus norvegicus (Rat).